The sequence spans 555 residues: Tau-cadinol synthase (555 aa).

Arginine 270, aspartate 307, aspartate 311, arginine 448, and aspartate 451 together coordinate (2E,6E)-farnesyl diphosphate. Residues aspartate 307 and aspartate 311 each coordinate Mg(2+). Positions 307-311 (DDTYD) match the DDXXD motif motif. Mg(2+) is bound by residues aspartate 451, serine 455, and glutamate 459.

This sequence belongs to the terpene synthase family. Requires Mg(2+) as cofactor.

It carries out the reaction (2E,6E)-farnesyl diphosphate + H2O = tau-cadinol + diphosphate. It catalyses the reaction (2E,6E)-farnesyl diphosphate = (+)-gamma-cadinene + diphosphate. The protein operates within secondary metabolite biosynthesis; terpenoid biosynthesis. In terms of biological role, sesquiterpene synthase that catalyzes the formation of sesquiterpenes and sesquiterpenoid alcohols. Converts farnesyl diphosphate (FPP) to tau-cadinol. Converts FPP to gamma-cadinene. Tau-cadinol is the major product. This is Tau-cadinol synthase from Lavandula angustifolia (Lavender).